An 800-amino-acid chain; its full sequence is N,N'-diacetylchitobiose phosphorylase (800 aa).

N-acetyl-alpha-D-glucosamine 1-phosphate-binding residues include Arg333, Arg343, Arg349, Asp350, Trp490, and Asp492. The Proton donor role is filled by Asp492. Asp492, Lys636, and Glu637 together coordinate N-acetyl-D-glucosamine. 5 residues coordinate N-acetyl-alpha-D-glucosamine 1-phosphate: Glu637, His644, Gln690, Thr709, and Gly710.

It belongs to the glycosyl hydrolase 94 family. In terms of assembly, homodimer.

It catalyses the reaction N,N'-diacetylchitobiose + phosphate = N-acetyl-alpha-D-glucosamine 1-phosphate + N-acetyl-D-glucosamine. In terms of biological role, catalyzes the reversible phosphorolysis of chitobiose (N,N'-diacetylchitobiose or (GlcNAc)(2)) into N-acetyl-alpha-D-glucosamine 1-phosphate (GlcNAc-1-P) and N-acetyl-D-glucosamine (GlcNAc) with inversion of the anomeric configuration. The polypeptide is N,N'-diacetylchitobiose phosphorylase (Vibrio furnissii).